The sequence spans 310 residues: MKVAVLGAAGGIGQALSLLLKTGLPAGSELSLYDVAPVVPGVAVDLSHIPTAVKVAGFGADALNEALKDADIVLIPAGMPRKPGMDRADLFNVNAGIIKTLAEGIVASCPKALVGIITNPVNGTVPIVAEVFKKAGTYDAKRVFGITTLDVIRSEAFVAELKGVDVATVKVPVIGGHSGTTILPLLSQVEGVSFTDEEVAALTPRIQNAGTEVVNAKAGGGSATLSMGAAAARFCMSLVKGLQGEDVVDYAYVAVENGDAEYFAHPVRLGKNGVEEILSYGELSAFETKAKNDMLETLKKDIKEGVDFMA.

Residues 7–13 (GAAGGIG) and aspartate 34 contribute to the NAD(+) site. 2 residues coordinate substrate: arginine 81 and arginine 87. Residues asparagine 94 and 117–119 (ITN) contribute to the NAD(+) site. Residues asparagine 119 and arginine 153 each contribute to the substrate site. Histidine 177 functions as the Proton acceptor in the catalytic mechanism. Methionine 227 provides a ligand contact to NAD(+).

Belongs to the LDH/MDH superfamily. MDH type 1 family. As to quaternary structure, homodimer.

The enzyme catalyses (S)-malate + NAD(+) = oxaloacetate + NADH + H(+). Catalyzes the reversible oxidation of malate to oxaloacetate. This chain is Malate dehydrogenase, found in Pseudoalteromonas translucida (strain TAC 125).